Reading from the N-terminus, the 429-residue chain is Adenylosuccinate synthetase (429 aa).

GTP is bound by residues 12–18 and 40–42; these read GDEGKGK and GHT. The active-site Proton acceptor is D13. The Mg(2+) site is built by D13 and G40. IMP-binding positions include 13–16, 38–41, T129, R143, Q223, T238, and R302; these read DEGK and NAGH. The Proton donor role is filled by H41. 298–304 lines the substrate pocket; sequence VVTGRKR. Residues R304, 330 to 332, and 412 to 414 contribute to the GTP site; these read KLD and STS.

The protein belongs to the adenylosuccinate synthetase family. As to quaternary structure, homodimer. Mg(2+) serves as cofactor.

It is found in the cytoplasm. It catalyses the reaction IMP + L-aspartate + GTP = N(6)-(1,2-dicarboxyethyl)-AMP + GDP + phosphate + 2 H(+). It functions in the pathway purine metabolism; AMP biosynthesis via de novo pathway; AMP from IMP: step 1/2. In terms of biological role, plays an important role in the de novo pathway of purine nucleotide biosynthesis. Catalyzes the first committed step in the biosynthesis of AMP from IMP. This Brucella ovis (strain ATCC 25840 / 63/290 / NCTC 10512) protein is Adenylosuccinate synthetase.